We begin with the raw amino-acid sequence, 264 residues long: 3-methyl-2-oxobutanoate hydroxymethyltransferase (264 aa).

2 residues coordinate Mg(2+): Asp-45 and Asp-84. 3-methyl-2-oxobutanoate contacts are provided by residues Asp-45 to Ser-46, Asp-84, and Lys-112. Position 114 (Glu-114) interacts with Mg(2+). Residue Glu-181 is the Proton acceptor of the active site.

The protein belongs to the PanB family. As to quaternary structure, homodecamer; pentamer of dimers. The cofactor is Mg(2+).

The protein resides in the cytoplasm. The catalysed reaction is 3-methyl-2-oxobutanoate + (6R)-5,10-methylene-5,6,7,8-tetrahydrofolate + H2O = 2-dehydropantoate + (6S)-5,6,7,8-tetrahydrofolate. It functions in the pathway cofactor biosynthesis; (R)-pantothenate biosynthesis; (R)-pantoate from 3-methyl-2-oxobutanoate: step 1/2. Catalyzes the reversible reaction in which hydroxymethyl group from 5,10-methylenetetrahydrofolate is transferred onto alpha-ketoisovalerate to form ketopantoate. The protein is 3-methyl-2-oxobutanoate hydroxymethyltransferase of Cronobacter sakazakii (strain ATCC BAA-894) (Enterobacter sakazakii).